A 377-amino-acid polypeptide reads, in one-letter code: Serine protease inhibitor (377 aa).

The signal sequence occupies residues 1-27 (MAALQAAVSSQLAISFFSSLIVPGAEK). N-linked (GlcNAc...) asparagine glycosylation is present at Asn301. The tract at residues 328–349 (GTEAAAATGFGVNFMSMPMQVR) is RCL. The N-linked (GlcNAc...) asparagine glycan is linked to Asn361.

It belongs to the serpin family.

In terms of biological role, inhibitor of serine proteases. Inhibits chymotrypsin, cathepsin G and human neutrophil elastase. The chain is Serine protease inhibitor from Cyanea capillata (Lion's mane jellyfish).